The sequence spans 307 residues: Protoheme IX farnesyltransferase (307 aa).

A run of 8 helical transmembrane segments spans residues 24–44, 52–72, 115–135, 152–172, 179–199, 224–244, 245–265, and 284–304; these read ISLLKPRVMSLVIFTALVGLV, PVIAFTAILCIAVGAGAAGAL, VVLGLLVNVLAGALLAFTIFF, IVIGGLSGALPPMVAWAAASG, VILVAIIFFWTPPHFWALSLY, QILLYTLFLVPLALSPVMLGE, AGLAYGVVAGVTGLGMLLLAV, and FGFSILYLFLLFATLLAEALV.

This sequence belongs to the UbiA prenyltransferase family. Protoheme IX farnesyltransferase subfamily.

The protein localises to the cell inner membrane. The catalysed reaction is heme b + (2E,6E)-farnesyl diphosphate + H2O = Fe(II)-heme o + diphosphate. It participates in porphyrin-containing compound metabolism; heme O biosynthesis; heme O from protoheme: step 1/1. Converts heme B (protoheme IX) to heme O by substitution of the vinyl group on carbon 2 of heme B porphyrin ring with a hydroxyethyl farnesyl side group. The chain is Protoheme IX farnesyltransferase from Azorhizobium caulinodans (strain ATCC 43989 / DSM 5975 / JCM 20966 / LMG 6465 / NBRC 14845 / NCIMB 13405 / ORS 571).